We begin with the raw amino-acid sequence, 634 residues long: 1-deoxy-D-xylulose-5-phosphate synthase (634 aa).

Thiamine diphosphate is bound by residues histidine 74 and 115–117 (AHS). Position 146 (aspartate 146) interacts with Mg(2+). Residues 147-148 (GA), asparagine 176, tyrosine 283, and glutamate 365 contribute to the thiamine diphosphate site. Asparagine 176 lines the Mg(2+) pocket.

The protein belongs to the transketolase family. DXPS subfamily. Homodimer. Mg(2+) serves as cofactor. The cofactor is thiamine diphosphate.

It catalyses the reaction D-glyceraldehyde 3-phosphate + pyruvate + H(+) = 1-deoxy-D-xylulose 5-phosphate + CO2. It participates in metabolic intermediate biosynthesis; 1-deoxy-D-xylulose 5-phosphate biosynthesis; 1-deoxy-D-xylulose 5-phosphate from D-glyceraldehyde 3-phosphate and pyruvate: step 1/1. In terms of biological role, catalyzes the acyloin condensation reaction between C atoms 2 and 3 of pyruvate and glyceraldehyde 3-phosphate to yield 1-deoxy-D-xylulose-5-phosphate (DXP). This chain is 1-deoxy-D-xylulose-5-phosphate synthase, found in Burkholderia mallei (strain ATCC 23344).